The following is a 141-amino-acid chain: Large ribosomal subunit protein uL11 (141 aa).

It belongs to the universal ribosomal protein uL11 family. Part of the ribosomal stalk of the 50S ribosomal subunit. Interacts with L10 and the large rRNA to form the base of the stalk. L10 forms an elongated spine to which L12 dimers bind in a sequential fashion forming a multimeric L10(L12)X complex. One or more lysine residues are methylated.

In terms of biological role, forms part of the ribosomal stalk which helps the ribosome interact with GTP-bound translation factors. The sequence is that of Large ribosomal subunit protein uL11 from Lactobacillus johnsonii (strain CNCM I-12250 / La1 / NCC 533).